The following is a 335-amino-acid chain: Ketol-acid reductoisomerase (NADP(+)) (335 aa).

One can recognise a KARI N-terminal Rossmann domain in the interval 5–185; the sequence is SKIYTDKDSN…GATRAGVIPT (181 aa). NADP(+)-binding positions include 28 to 31, serine 56, and 86 to 89; these read YGSQ and DMVQ. Residue histidine 111 is part of the active site. Glycine 137 serves as a coordination point for NADP(+). Residues 186–331 enclose the KARI C-terminal knotted domain; that stretch reads TFKEETETDL…NQLKDLIQKG (146 aa). Mg(2+) contacts are provided by aspartate 194, glutamate 198, glutamate 230, and glutamate 234. Residue serine 255 coordinates substrate.

This sequence belongs to the ketol-acid reductoisomerase family. It depends on Mg(2+) as a cofactor.

The enzyme catalyses (2R)-2,3-dihydroxy-3-methylbutanoate + NADP(+) = (2S)-2-acetolactate + NADPH + H(+). The catalysed reaction is (2R,3R)-2,3-dihydroxy-3-methylpentanoate + NADP(+) = (S)-2-ethyl-2-hydroxy-3-oxobutanoate + NADPH + H(+). Its pathway is amino-acid biosynthesis; L-isoleucine biosynthesis; L-isoleucine from 2-oxobutanoate: step 2/4. It participates in amino-acid biosynthesis; L-valine biosynthesis; L-valine from pyruvate: step 2/4. Its function is as follows. Involved in the biosynthesis of branched-chain amino acids (BCAA). Catalyzes an alkyl-migration followed by a ketol-acid reduction of (S)-2-acetolactate (S2AL) to yield (R)-2,3-dihydroxy-isovalerate. In the isomerase reaction, S2AL is rearranged via a Mg-dependent methyl migration to produce 3-hydroxy-3-methyl-2-ketobutyrate (HMKB). In the reductase reaction, this 2-ketoacid undergoes a metal-dependent reduction by NADPH to yield (R)-2,3-dihydroxy-isovalerate. This chain is Ketol-acid reductoisomerase (NADP(+)), found in Saccharolobus islandicus (strain L.S.2.15 / Lassen #1) (Sulfolobus islandicus).